We begin with the raw amino-acid sequence, 330 residues long: Probable cell division protein WhiA (330 aa).

A DNA-binding region (H-T-H motif) is located at residues 275–308; that stretch reads SLDELGRLSDPPLTKDAIAGRIRRLLAMADRRAE.

The protein belongs to the WhiA family.

In terms of biological role, involved in cell division and chromosome segregation. In Kocuria rhizophila (strain ATCC 9341 / DSM 348 / NBRC 103217 / DC2201), this protein is Probable cell division protein WhiA.